Here is a 127-residue protein sequence, read N- to C-terminus: Glycine cleavage system H protein 1 (127 aa).

The Lipoyl-binding domain maps to 20–101 (SVTVGITPYA…LGAGWFFRFI (82 aa)). Lys60 is modified (N6-lipoyllysine).

This sequence belongs to the GcvH family. As to quaternary structure, the glycine cleavage system is composed of four proteins: P, T, L and H. The cofactor is (R)-lipoate.

Functionally, the glycine cleavage system catalyzes the degradation of glycine. The H protein shuttles the methylamine group of glycine from the P protein to the T protein. The protein is Glycine cleavage system H protein 1 of Pseudomonas syringae pv. tomato (strain ATCC BAA-871 / DC3000).